The following is a 312-amino-acid chain: Carbonic anhydrase 4 (312 aa).

Residues 1–18 (MRLLLALLVLAAAPPQAR) form the signal peptide. The 265-residue stretch at 21 to 285 (SHWCYQIQVK…LGQRQVFRSG (265 aa)) folds into the Alpha-carbonic anhydrase domain. Disulfide bonds link Cys24/Cys36 and Cys46/Cys229. The N-linked (GlcNAc...) asparagine glycan is linked to Asn33. His88 acts as the Proton donor/acceptor in catalysis. 3 residues coordinate Zn(2+): His115, His117, and His140. 2 N-linked (GlcNAc...) asparagine glycosylation sites follow: Asn152 and Asn195. Residue 225 to 226 (TT) participates in substrate binding. N-linked (GlcNAc...) asparagine glycosylation is present at Asn265. Ser284 carries GPI-anchor amidated serine lipidation. The propeptide at 285 to 312 (GAPGLLLAQPLPTLLAPVLACLTVGFLR) is removed in mature form.

It belongs to the alpha-carbonic anhydrase family. Interacts with SLC4A4. Zn(2+) serves as cofactor.

It localises to the cell membrane. It catalyses the reaction hydrogencarbonate + H(+) = CO2 + H2O. Inhibited by acetazolamide. Its function is as follows. Catalyzes the reversible hydration of carbon dioxide into bicarbonate and protons and thus is essential to maintaining intracellular and extracellular pH. May stimulate the sodium/bicarbonate transporter activity of SLC4A4 that acts in pH homeostasis. It is essential for acid overload removal from the retina and retina epithelium, and acid release in the choriocapillaris in the choroid. This Bos taurus (Bovine) protein is Carbonic anhydrase 4 (CA4).